We begin with the raw amino-acid sequence, 392 residues long: tRNA (guanine(26)-N(2)/guanine(27)-N(2))-dimethyltransferase (392 aa).

One can recognise a Trm1 methyltransferase domain in the interval 2–375; sequence EIVQEGIAKI…LSFEEVMKKM (374 aa). R36, R66, D84, E113, and A114 together coordinate S-adenosyl-L-methionine. Zn(2+) contacts are provided by C247, C250, C266, and C269.

The protein belongs to the class I-like SAM-binding methyltransferase superfamily. Trm1 family.

It catalyses the reaction guanosine(26)/guanosine(27) in tRNA + 4 S-adenosyl-L-methionine = N(2)-dimethylguanosine(26)/N(2)-dimethylguanosine(27) in tRNA + 4 S-adenosyl-L-homocysteine + 4 H(+). In terms of biological role, dimethylates the guanine residues at position 26 and 27 of one or more tRNAs using S-adenosyl-L-methionine as donor of the methyl groups. The chain is tRNA (guanine(26)-N(2)/guanine(27)-N(2))-dimethyltransferase from Aquifex aeolicus (strain VF5).